The sequence spans 200 residues: GTP cyclohydrolase-2 (200 aa).

52-56 (RIHSE) is a GTP binding site. Positions 57, 68, and 70 each coordinate Zn(2+). Residues Gln-73, 94 to 96 (EGR), and Thr-116 each bind GTP. Asp-128 (proton acceptor) is an active-site residue. Catalysis depends on Arg-130, which acts as the Nucleophile. GTP is bound by residues Thr-151 and Lys-156.

This sequence belongs to the GTP cyclohydrolase II family. The cofactor is Zn(2+).

It catalyses the reaction GTP + 4 H2O = 2,5-diamino-6-hydroxy-4-(5-phosphoribosylamino)-pyrimidine + formate + 2 phosphate + 3 H(+). Its pathway is cofactor biosynthesis; riboflavin biosynthesis; 5-amino-6-(D-ribitylamino)uracil from GTP: step 1/4. Functionally, catalyzes the conversion of GTP to 2,5-diamino-6-ribosylamino-4(3H)-pyrimidinone 5'-phosphate (DARP), formate and pyrophosphate. This is GTP cyclohydrolase-2 from Psychromonas ingrahamii (strain DSM 17664 / CCUG 51855 / 37).